Here is a 1051-residue protein sequence, read N- to C-terminus: Carbamoyl phosphate synthase large chain (1051 aa).

The interval 1–399 (MKETPKKVLV…SLQKAVRMLD (399 aa)) is carboxyphosphate synthetic domain. ATP is bound by residues arginine 127, arginine 167, glycine 173, glycine 174, lysine 206, leucine 208, glutamate 213, glycine 239, valine 240, histidine 241, glutamine 282, and glutamate 296. The 195-residue stretch at 131–325 (RETMIENNLP…LAYVSAKLAL (195 aa)) folds into the ATP-grasp 1 domain. Mg(2+)-binding residues include glutamine 282, glutamate 296, and asparagine 298. 3 residues coordinate Mn(2+): glutamine 282, glutamate 296, and asparagine 298. Positions 400 to 548 (IGEPGVVGGK…LTYNGTEDDL (149 aa)) are oligomerization domain. Residues 549–930 (EFSQGNKLLI…LKSWLSSIPN (382 aa)) are carbamoyl phosphate synthetic domain. An ATP-grasp 2 domain is found at 673–863 (SKLLDKLGIS…LINESMKAIF (191 aa)). ATP contacts are provided by arginine 709, lysine 748, isoleucine 750, glutamate 755, glycine 779, valine 780, histidine 781, serine 782, glutamine 822, and glutamate 834. Mg(2+)-binding residues include glutamine 822, glutamate 834, and asparagine 836. Residues glutamine 822, glutamate 834, and asparagine 836 each coordinate Mn(2+). The MGS-like domain occupies 930 to 1051 (NRIPNKNGIA…FEISEYGGGI (122 aa)). The allosteric domain stretch occupies residues 931–1051 (RIPNKNGIAL…FEISEYGGGI (121 aa)).

This sequence belongs to the CarB family. In terms of assembly, composed of two chains; the small (or glutamine) chain promotes the hydrolysis of glutamine to ammonia, which is used by the large (or ammonia) chain to synthesize carbamoyl phosphate. Tetramer of heterodimers (alpha,beta)4. Mg(2+) is required as a cofactor. Mn(2+) serves as cofactor.

It carries out the reaction hydrogencarbonate + L-glutamine + 2 ATP + H2O = carbamoyl phosphate + L-glutamate + 2 ADP + phosphate + 2 H(+). The enzyme catalyses hydrogencarbonate + NH4(+) + 2 ATP = carbamoyl phosphate + 2 ADP + phosphate + 2 H(+). It functions in the pathway amino-acid biosynthesis; L-arginine biosynthesis; carbamoyl phosphate from bicarbonate: step 1/1. Its pathway is pyrimidine metabolism; UMP biosynthesis via de novo pathway; (S)-dihydroorotate from bicarbonate: step 1/3. Large subunit of the glutamine-dependent carbamoyl phosphate synthetase (CPSase). CPSase catalyzes the formation of carbamoyl phosphate from the ammonia moiety of glutamine, carbonate, and phosphate donated by ATP, constituting the first step of 2 biosynthetic pathways, one leading to arginine and/or urea and the other to pyrimidine nucleotides. The large subunit (synthetase) binds the substrates ammonia (free or transferred from glutamine from the small subunit), hydrogencarbonate and ATP and carries out an ATP-coupled ligase reaction, activating hydrogencarbonate by forming carboxy phosphate which reacts with ammonia to form carbamoyl phosphate. The chain is Carbamoyl phosphate synthase large chain from Saccharolobus islandicus (strain M.16.27) (Sulfolobus islandicus).